Here is a 336-residue protein sequence, read N- to C-terminus: Cytosolic Fe-S cluster assembly factor NBP35 (336 aa).

The tract at residues 1 to 20 (MIATQRPFPIPSPVPLAPSS) is disordered. Residues Cys-35, Cys-49, Cys-52, and Cys-58 each contribute to the [4Fe-4S] cluster site. 88–95 (GKGGVGKS) is a binding site for ATP. Residues Cys-261 and Cys-264 each coordinate [4Fe-4S] cluster.

Belongs to the Mrp/NBP35 ATP-binding proteins family. NUBP1/NBP35 subfamily. As to quaternary structure, heterotetramer of 2 NBP35 and 2 CFD1 chains. It depends on [4Fe-4S] cluster as a cofactor.

The protein localises to the cytoplasm. Component of the cytosolic iron-sulfur (Fe/S) protein assembly (CIA) machinery. Required for maturation of extramitochondrial Fe-S proteins. The NBP35-CFD1 heterotetramer forms a Fe-S scaffold complex, mediating the de novo assembly of an Fe-S cluster and its transfer to target apoproteins. The chain is Cytosolic Fe-S cluster assembly factor NBP35 from Cryptococcus neoformans var. neoformans serotype D (strain B-3501A) (Filobasidiella neoformans).